The following is a 456-amino-acid chain: Methylenetetrahydrofolate--tRNA-(uracil-5-)-methyltransferase TrmFO (456 aa).

12–17 (GGGLAG) is an FAD binding site.

It belongs to the MnmG family. TrmFO subfamily. It depends on FAD as a cofactor.

The protein resides in the cytoplasm. It carries out the reaction uridine(54) in tRNA + (6R)-5,10-methylene-5,6,7,8-tetrahydrofolate + NADH + H(+) = 5-methyluridine(54) in tRNA + (6S)-5,6,7,8-tetrahydrofolate + NAD(+). It catalyses the reaction uridine(54) in tRNA + (6R)-5,10-methylene-5,6,7,8-tetrahydrofolate + NADPH + H(+) = 5-methyluridine(54) in tRNA + (6S)-5,6,7,8-tetrahydrofolate + NADP(+). In terms of biological role, catalyzes the folate-dependent formation of 5-methyl-uridine at position 54 (M-5-U54) in all tRNAs. The protein is Methylenetetrahydrofolate--tRNA-(uracil-5-)-methyltransferase TrmFO of Picosynechococcus sp. (strain ATCC 27264 / PCC 7002 / PR-6) (Agmenellum quadruplicatum).